The primary structure comprises 133 residues: Small ribosomal subunit protein uS12c (133 aa).

It belongs to the universal ribosomal protein uS12 family. As to quaternary structure, part of the 30S ribosomal subunit.

It is found in the plastid. It localises to the chloroplast. In terms of biological role, with S4 and S5 plays an important role in translational accuracy. Located at the interface of the 30S and 50S subunits. The sequence is that of Small ribosomal subunit protein uS12c (rps12) from Chlamydomonas reinhardtii (Chlamydomonas smithii).